The chain runs to 403 residues: RNA-binding motif, single-stranded-interacting protein 1 (403 aa).

The interval 30-56 (PAHPMAPPSPSTTSSNNNSSSSSNSGW) is disordered. Over residues 40–54 (STTSSNNNSSSSSNS) the composition is skewed to low complexity. 2 consecutive RRM domains span residues 62 to 135 (TNLY…MAKQ) and 141 to 226 (TNLY…FADG). T208 is modified (phosphothreonine). Over residues 382–395 (GQQQVAVETSNDHS) the composition is skewed to polar residues. The disordered stretch occupies residues 382–403 (GQQQVAVETSNDHSPYTFPPNK).

As to expression, ubiquitous. Expressed in all tissues except testis.

It localises to the nucleus. Functionally, single-stranded DNA binding protein that interacts with the region upstream of the MYC gene. Binds specifically to the DNA sequence motif 5'-[AT]CT[AT][AT]T-3'. Probably has a role in DNA replication. This is RNA-binding motif, single-stranded-interacting protein 1 (Rbms1) from Mus musculus (Mouse).